A 273-amino-acid polypeptide reads, in one-letter code: Protein ALUMINUM SENSITIVE 3 (273 aa).

7 helical membrane-spanning segments follow: residues 14–34 (WLIV…VVLL), 51–71 (IYSV…LQFI), 76–96 (NSGW…YTAG), 107–127 (YVAG…LVLL), 136–156 (YMIP…GVTM), 191–213 (ALVI…SLPG), and 228–248 (AIQL…VSSI).

Belongs to the UPF0014 family. Expressed in roots, leaves, stems, and flowers.

The protein localises to the cell membrane. Required for aluminum (Al) resistance/tolerance, probably by translocating Al from sensitive tissues such as growing roots to tissues less sensisitive to the toxic effects of Al. The polypeptide is Protein ALUMINUM SENSITIVE 3 (ALS3) (Arabidopsis thaliana (Mouse-ear cress)).